The sequence spans 299 residues: Quinolinate synthase (299 aa).

H21 and S38 together coordinate iminosuccinate. C83 is a binding site for [4Fe-4S] cluster. Residues 109 to 111 (YVN) and S126 each bind iminosuccinate. Residue C170 participates in [4Fe-4S] cluster binding. Residues 196–198 (HPE) and T213 each bind iminosuccinate. C256 lines the [4Fe-4S] cluster pocket.

Belongs to the quinolinate synthase family. Type 2 subfamily. It depends on [4Fe-4S] cluster as a cofactor.

It is found in the cytoplasm. It carries out the reaction iminosuccinate + dihydroxyacetone phosphate = quinolinate + phosphate + 2 H2O + H(+). It participates in cofactor biosynthesis; NAD(+) biosynthesis; quinolinate from iminoaspartate: step 1/1. In terms of biological role, catalyzes the condensation of iminoaspartate with dihydroxyacetone phosphate to form quinolinate. The polypeptide is Quinolinate synthase (Pyrococcus abyssi (strain GE5 / Orsay)).